The chain runs to 287 residues: Phosphatidylserine decarboxylase proenzyme (287 aa).

Active-site charge relay system; for autoendoproteolytic cleavage activity residues include Asp90, His147, and Ser252. Ser252 functions as the Schiff-base intermediate with substrate; via pyruvic acid; for decarboxylase activity in the catalytic mechanism. Ser252 is modified (pyruvic acid (Ser); by autocatalysis).

The protein belongs to the phosphatidylserine decarboxylase family. PSD-B subfamily. Prokaryotic type I sub-subfamily. In terms of assembly, heterodimer of a large membrane-associated beta subunit and a small pyruvoyl-containing alpha subunit. Pyruvate serves as cofactor. Post-translationally, is synthesized initially as an inactive proenzyme. Formation of the active enzyme involves a self-maturation process in which the active site pyruvoyl group is generated from an internal serine residue via an autocatalytic post-translational modification. Two non-identical subunits are generated from the proenzyme in this reaction, and the pyruvate is formed at the N-terminus of the alpha chain, which is derived from the carboxyl end of the proenzyme. The autoendoproteolytic cleavage occurs by a canonical serine protease mechanism, in which the side chain hydroxyl group of the serine supplies its oxygen atom to form the C-terminus of the beta chain, while the remainder of the serine residue undergoes an oxidative deamination to produce ammonia and the pyruvoyl prosthetic group on the alpha chain. During this reaction, the Ser that is part of the protease active site of the proenzyme becomes the pyruvoyl prosthetic group, which constitutes an essential element of the active site of the mature decarboxylase.

It is found in the cell membrane. It catalyses the reaction a 1,2-diacyl-sn-glycero-3-phospho-L-serine + H(+) = a 1,2-diacyl-sn-glycero-3-phosphoethanolamine + CO2. It functions in the pathway phospholipid metabolism; phosphatidylethanolamine biosynthesis; phosphatidylethanolamine from CDP-diacylglycerol: step 2/2. Catalyzes the formation of phosphatidylethanolamine (PtdEtn) from phosphatidylserine (PtdSer). In Pseudomonas putida (strain ATCC 47054 / DSM 6125 / CFBP 8728 / NCIMB 11950 / KT2440), this protein is Phosphatidylserine decarboxylase proenzyme.